The primary structure comprises 454 residues: Protein disulfide-isomerase TMX3 (454 aa).

A signal peptide spans 1 to 24 (MAAWKSWTALRLCATVVVLDMVVC). The region spanning 25 to 128 (KGFVEDLDES…KDDIIEFAHR (104 aa)) is the Thioredoxin domain. Residues 25-375 (KGFVEDLDES…TIVSIFKSSP (351 aa)) are Lumenal-facing. Active-site nucleophile residues include cysteine 53 and cysteine 56. The cysteines at positions 53 and 56 are disulfide-linked. N-linked (GlcNAc...) asparagine glycans are attached at residues asparagine 258 and asparagine 313. The chain crosses the membrane as a helical span at residues 376-396 (LMGCFLFGLPLGVISIMCYGI). Over 397–454 (YTADTDGGYIEERYEVSKSENENQEQIEESKEQQEPSSGGSVVPTVQEPKDVLEKKKD) the chain is Cytoplasmic. Residues 412–454 (VSKSENENQEQIEESKEQQEPSSGGSVVPTVQEPKDVLEKKKD) form a disordered region. Basic and acidic residues predominate over residues 444–454 (EPKDVLEKKKD). The Di-lysine motif signature appears at 451–454 (KKKD).

This sequence belongs to the protein disulfide isomerase family. In terms of processing, N-glycosylated. Widely expressed. Expressed in brain, testis, lung, skin, kidney, uterus, bone, stomach, liver, prostate, placenta, eye and muscle.

Its subcellular location is the endoplasmic reticulum membrane. The catalysed reaction is Catalyzes the rearrangement of -S-S- bonds in proteins.. Probable disulfide isomerase, which participates in the folding of proteins containing disulfide bonds. May act as a dithiol oxidase. Acts as a regulator of endoplasmic reticulum-mitochondria contact sites via its ability to regulate redox signals. The protein is Protein disulfide-isomerase TMX3 (TMX3) of Homo sapiens (Human).